A 683-amino-acid polypeptide reads, in one-letter code: WD repeat-containing protein 48 homolog (683 aa).

WD repeat units follow at residues 27–82 (SNRS…PVQY), 88–130 (QHTD…FIDC), 133–167 (THKD…INAN), 176–215 (GCKD…KIMK), 218–257 (GHTD…CIAT), 260–299 (AHEE…KSQL), and 302–343 (KEEA…QLSI). The segment at 341 to 364 (LSIGGDEDGPSTSNANHSVSASSS) is disordered. Over residues 351–364 (STSNANHSVSASSS) the composition is skewed to low complexity. One copy of the WD 8 repeat lies at 389 to 428 (PGAPAIKKHAMLSDKRHVLTRDSDGNVALYDVLAARKIKD).

Belongs to the WD repeat WDR48 family. As to quaternary structure, interacts with usp-46; the interaction increases the catalytic activity of usp-46 in the presence of wdr-20. As to expression, expressed in several head neurons and cells in the tail including the anal depressor cell.

Functionally, together with wdr-20, binds to and stimulates the activity of the deubiquitinating enzyme usp-46, leading to deubiquitination and stabilization of the glr-1 glutamate receptor. The protein is WD repeat-containing protein 48 homolog (wdr-48) of Caenorhabditis elegans.